The sequence spans 803 residues: Volume-regulated anion channel subunit LRRC8C (803 aa).

Residues Met1–Pro22 are Cytoplasmic-facing. Residues Trp23 to Cys43 form a helical membrane-spanning segment. At Thr44 to Lys125 the chain is on the extracellular side. 2 disulfides stabilise this stretch: Cys54–Cys308 and Cys115–Cys293. N-linked (GlcNAc...) asparagine glycosylation is found at Asn64 and Asn70. A helical transmembrane segment spans residues Tyr126–Phe146. Residues Lys147–Thr266 lie on the Cytoplasmic side of the membrane. The interval Glu177–Asn209 is disordered. Polar residues predominate over residues Asn191 to Asn209. Phosphoserine occurs at positions 212 and 215. Residues Val267–Val287 form a helical membrane-spanning segment. At Gln288–Ser320 the chain is on the extracellular side. The helical transmembrane segment at Phe321–Leu341 threads the bilayer. At Phe342 to Glu803 the chain is on the cytoplasmic side. 17 LRR repeats span residues Glu397 to Gln419, Thr420 to Ile443, Leu446 to Gln465, Asn468 to Lys490, Asn492 to Leu513, Asn515 to Glu536, Ser543 to Val563, His566 to Lys586, Asn590 to Leu611, Ser613 to Gln634, Lys638 to Leu659, Ser661 to Cys682, Lys684 to Leu705, Ser707 to Cys728, Lys730 to Leu751, Phe753 to Cys774, and Ala776 to Gln799.

The protein belongs to the LRRC8 family. In terms of assembly, heterohexamer; oligomerizes with other LRRC8 proteins (LRRC8A, LRRC8B, LRRC8D and/or LRRC8E) to form a heterohexamer. Homoheptamer; inactive, likely because it is not targeted to the plasma membrane in the absence of LRRC8A. In vivo, the subunit composition may depend primarily on expression levels, and heterooligomeric channels containing various proportions of the different LRRC8 proteins may coexist.

It is found in the cell membrane. The protein resides in the endoplasmic reticulum membrane. It carries out the reaction chloride(in) = chloride(out). It catalyses the reaction iodide(out) = iodide(in). The catalysed reaction is taurine(out) = taurine(in). The enzyme catalyses 2',3'-cGAMP(out) = 2',3'-cGAMP(in). In terms of biological role, non-essential component of the volume-regulated anion channel (VRAC, also named VSOAC channel), an anion channel required to maintain a constant cell volume in response to extracellular or intracellular osmotic changes. The VRAC channel conducts iodide better than chloride and can also conduct organic osmolytes like taurine. Plays a redundant role in the efflux of amino acids, such as aspartate and glutamate, in response to osmotic stress. The VRAC channel also mediates transport of immunoreactive cyclic dinucleotide GMP-AMP (2'-3'-cGAMP), an immune messenger produced in response to DNA virus in the cytosol. Channel activity requires LRRC8A plus at least one other family member (LRRC8B, LRRC8C, LRRC8D or LRRC8E); channel characteristics depend on the precise subunit composition. This Bos taurus (Bovine) protein is Volume-regulated anion channel subunit LRRC8C.